We begin with the raw amino-acid sequence, 28 residues long: Unknown protein from spot 154 of 2D-PAGE of etiolated coleoptile (28 aa).

The sequence is that of Unknown protein from spot 154 of 2D-PAGE of etiolated coleoptile from Zea mays (Maize).